The chain runs to 516 residues: GMP synthase [glutamine-hydrolyzing] (516 aa).

The 192-residue stretch at 10 to 201 folds into the Glutamine amidotransferase type-1 domain; sequence KIIVLDFGSQ…AFDVCGAVAN (192 aa). C87 functions as the Nucleophile in the catalytic mechanism. Residues H175 and E177 contribute to the active site. A GMPS ATP-PPase domain is found at 202–391; the sequence is WTMADFIDMQ…LGIPHDLVWR (190 aa). 229–235 contacts ATP; it reads SGGVDSS.

As to quaternary structure, homodimer.

It carries out the reaction XMP + L-glutamine + ATP + H2O = GMP + L-glutamate + AMP + diphosphate + 2 H(+). It functions in the pathway purine metabolism; GMP biosynthesis; GMP from XMP (L-Gln route): step 1/1. Catalyzes the synthesis of GMP from XMP. The protein is GMP synthase [glutamine-hydrolyzing] of Lactobacillus acidophilus (strain ATCC 700396 / NCK56 / N2 / NCFM).